The chain runs to 298 residues: Protease HtpX (298 aa).

The next 2 membrane-spanning stretches (helical) occupy residues 4-24 and 41-61; these read IALY…TLSL and TSLL…SLLI. His147 is a Zn(2+) binding site. The active site involves Glu148. His151 serves as a coordination point for Zn(2+). The next 2 helical transmembrane spans lie at 162–182 and 193–213; these read LIQG…GYVI and GLGF…GIAA. Residue Glu225 participates in Zn(2+) binding.

It belongs to the peptidase M48B family. The cofactor is Zn(2+).

It is found in the cell inner membrane. In Alcanivorax borkumensis (strain ATCC 700651 / DSM 11573 / NCIMB 13689 / SK2), this protein is Protease HtpX.